Reading from the N-terminus, the 351-residue chain is Sesquiterpene synthase 14 (351 aa).

Mg(2+) is bound by residues D87, N223, S227, and E231. Positions 87–91 (DEYTD) match the DDXXD motif motif. The NSE/DTE motif signature appears at 223–231 (NDIASYNKE). 2 residues coordinate (2E,6E)-farnesyl diphosphate: R312 and Y313.

The protein belongs to the terpene synthase family. Requires Mg(2+) as cofactor.

It carries out the reaction (2E,6E)-farnesyl diphosphate = pentalenene + diphosphate. Its function is as follows. Terpene cyclase that catalyzes the cyclization of farnesyl diphosphate (FPP) to pentalenene as a major product, as well as caryophyllene. This Postia placenta (strain ATCC 44394 / Madison 698-R) (Brown rot fungus) protein is Sesquiterpene synthase 14.